Here is a 208-residue protein sequence, read N- to C-terminus: Imidazole glycerol phosphate synthase subunit HisH (208 aa).

One can recognise a Glutamine amidotransferase type-1 domain in the interval 1–206 (MFAIVDYDTG…KEMVSANDFS (206 aa)). Cys79 functions as the Nucleophile in the catalytic mechanism. Residues His181 and Glu183 contribute to the active site.

Heterodimer of HisH and HisF.

The protein resides in the cytoplasm. The catalysed reaction is 5-[(5-phospho-1-deoxy-D-ribulos-1-ylimino)methylamino]-1-(5-phospho-beta-D-ribosyl)imidazole-4-carboxamide + L-glutamine = D-erythro-1-(imidazol-4-yl)glycerol 3-phosphate + 5-amino-1-(5-phospho-beta-D-ribosyl)imidazole-4-carboxamide + L-glutamate + H(+). It carries out the reaction L-glutamine + H2O = L-glutamate + NH4(+). It functions in the pathway amino-acid biosynthesis; L-histidine biosynthesis; L-histidine from 5-phospho-alpha-D-ribose 1-diphosphate: step 5/9. In terms of biological role, IGPS catalyzes the conversion of PRFAR and glutamine to IGP, AICAR and glutamate. The HisH subunit catalyzes the hydrolysis of glutamine to glutamate and ammonia as part of the synthesis of IGP and AICAR. The resulting ammonia molecule is channeled to the active site of HisF. The sequence is that of Imidazole glycerol phosphate synthase subunit HisH from Lactiplantibacillus plantarum (strain ATCC BAA-793 / NCIMB 8826 / WCFS1) (Lactobacillus plantarum).